The sequence spans 487 residues: N-succinylglutamate 5-semialdehyde dehydrogenase (487 aa).

The tract at residues 1–23 is disordered; the sequence is MTHFIKGQWHTGKGHDVASSNPA. Position 220-225 (220-225) interacts with NAD(+); sequence GSSRTG. Residues Glu243 and Cys277 contribute to the active site.

The protein belongs to the aldehyde dehydrogenase family. AstD subfamily.

It carries out the reaction N-succinyl-L-glutamate 5-semialdehyde + NAD(+) + H2O = N-succinyl-L-glutamate + NADH + 2 H(+). Its pathway is amino-acid degradation; L-arginine degradation via AST pathway; L-glutamate and succinate from L-arginine: step 4/5. Functionally, catalyzes the NAD-dependent reduction of succinylglutamate semialdehyde into succinylglutamate. This is N-succinylglutamate 5-semialdehyde dehydrogenase from Shewanella oneidensis (strain ATCC 700550 / JCM 31522 / CIP 106686 / LMG 19005 / NCIMB 14063 / MR-1).